We begin with the raw amino-acid sequence, 212 residues long: Uridine kinase (212 aa).

13–20 (GASASGKS) is a binding site for ATP.

This sequence belongs to the uridine kinase family.

The protein localises to the cytoplasm. The enzyme catalyses uridine + ATP = UMP + ADP + H(+). It catalyses the reaction cytidine + ATP = CMP + ADP + H(+). It participates in pyrimidine metabolism; CTP biosynthesis via salvage pathway; CTP from cytidine: step 1/3. It functions in the pathway pyrimidine metabolism; UMP biosynthesis via salvage pathway; UMP from uridine: step 1/1. This is Uridine kinase from Shewanella oneidensis (strain ATCC 700550 / JCM 31522 / CIP 106686 / LMG 19005 / NCIMB 14063 / MR-1).